The following is a 432-amino-acid chain: MGNNVVVLGTQWGDEGKGKIVDLLTERAKYVVRYQGGHNAGHTLVINGEKTVLHLIPSGILRENVTSIIGNGVVLSPAALMKEMKELEDRGIPVRERLLLSEACPLILDYHVALDNAREKARGAKAIGTTGRGIGPAYEDKVARRGLRVGDLFDKETFAEKLKEVMEYHNFQLVNYYKAEAVDYQKVLDDTMAVADILTSMVVDVSDLLDQARQRGDFVMFEGAQGTLLDIDHGTYPYVTSSNTTAGGVATGSGLGPRYVDYVLGILKAYSTRVGAGPFPTELFDETGEFLCKQGNEYGATTGRRRRTGWLDTVAVRRAVQLNSLSGFCLTKLDVLDGLKEVKLCVAYRMPDGREVTTTPLAADDWKGVEPIYETMPGWSESTFGVKDRSGLPQAALNYIKRIEELTGVPIDIISTGPDRTETMILRDPFDA.

Residues 13–19 (GDEGKGK) and 41–43 (GHT) contribute to the GTP site. The active-site Proton acceptor is Asp14. The Mg(2+) site is built by Asp14 and Gly41. IMP contacts are provided by residues 14–17 (DEGK), 39–42 (NAGH), Thr130, Arg144, Gln225, Thr240, and Arg304. Residue His42 is the Proton donor of the active site. Residue 300–306 (ATTGRRR) participates in substrate binding. Residues Arg306, 332 to 334 (KLD), and 415 to 417 (STG) contribute to the GTP site.

Belongs to the adenylosuccinate synthetase family. Homodimer. It depends on Mg(2+) as a cofactor.

Its subcellular location is the cytoplasm. It carries out the reaction IMP + L-aspartate + GTP = N(6)-(1,2-dicarboxyethyl)-AMP + GDP + phosphate + 2 H(+). It participates in purine metabolism; AMP biosynthesis via de novo pathway; AMP from IMP: step 1/2. Plays an important role in the de novo pathway of purine nucleotide biosynthesis. Catalyzes the first committed step in the biosynthesis of AMP from IMP. This is Adenylosuccinate synthetase from Salmonella heidelberg (strain SL476).